The primary structure comprises 148 residues: Ubiquitin-conjugating enzyme E2 10 (148 aa).

The UBC core domain maps to 1–147; that stretch reads MASKRILKEL…ARSWTQKYAM (147 aa). The active-site Glycyl thioester intermediate is cysteine 85.

It belongs to the ubiquitin-conjugating enzyme family. Interacts with CHIP and the E3 ubiquitin ligase BB. Associates with the E3 ubiquitin ligase JMJ24. As to expression, ubiquitously expressed with the highest levels in rosette leaves, roots and petals.

It catalyses the reaction S-ubiquitinyl-[E1 ubiquitin-activating enzyme]-L-cysteine + [E2 ubiquitin-conjugating enzyme]-L-cysteine = [E1 ubiquitin-activating enzyme]-L-cysteine + S-ubiquitinyl-[E2 ubiquitin-conjugating enzyme]-L-cysteine.. It participates in protein modification; protein ubiquitination. In terms of biological role, accepts the ubiquitin from the E1 complex and catalyzes its covalent attachment to other proteins. Mediates the selective degradation of short-lived and abnormal proteins. The chain is Ubiquitin-conjugating enzyme E2 10 from Arabidopsis thaliana (Mouse-ear cress).